A 78-amino-acid chain; its full sequence is Large ribosomal subunit protein bL31 (78 aa).

Residues C16, C18, C38, and C41 each coordinate Zn(2+).

Belongs to the bacterial ribosomal protein bL31 family. Type A subfamily. As to quaternary structure, part of the 50S ribosomal subunit. The cofactor is Zn(2+).

Functionally, binds the 23S rRNA. The chain is Large ribosomal subunit protein bL31 from Parafrankia sp. (strain EAN1pec).